We begin with the raw amino-acid sequence, 346 residues long: tRNA N6-adenosine threonylcarbamoyltransferase (346 aa).

Residues H111 and H115 each contribute to the Fe cation site. Residues 134 to 138, D167, G180, and N279 contribute to the substrate site; that span reads LVSGG. D307 serves as a coordination point for Fe cation.

It belongs to the KAE1 / TsaD family. Requires Fe(2+) as cofactor.

Its subcellular location is the cytoplasm. It catalyses the reaction L-threonylcarbamoyladenylate + adenosine(37) in tRNA = N(6)-L-threonylcarbamoyladenosine(37) in tRNA + AMP + H(+). Its function is as follows. Required for the formation of a threonylcarbamoyl group on adenosine at position 37 (t(6)A37) in tRNAs that read codons beginning with adenine. Is involved in the transfer of the threonylcarbamoyl moiety of threonylcarbamoyl-AMP (TC-AMP) to the N6 group of A37, together with TsaE and TsaB. TsaD likely plays a direct catalytic role in this reaction. This Burkholderia pseudomallei (strain 1106a) protein is tRNA N6-adenosine threonylcarbamoyltransferase.